Consider the following 179-residue polypeptide: Inner membrane-spanning protein YciB (179 aa).

The next 5 helical transmembrane spans lie at 22–42 (IYAA…YTWI), 50–70 (MALI…FFHN), 76–96 (WKVT…QWVM), 121–141 (IAWA…AFWM), and 149–169 (FKVF…GVYI).

This sequence belongs to the YciB family.

It is found in the cell inner membrane. Plays a role in cell envelope biogenesis, maintenance of cell envelope integrity and membrane homeostasis. The polypeptide is Inner membrane-spanning protein YciB (Enterobacter sp. (strain 638)).